Consider the following 145-residue polypeptide: Peptide methionine sulfoxide reductase MsrB (145 aa).

One can recognise a MsrB domain in the interval 6–129 (KNERLQQLTD…NSAALRFIPV (124 aa)). Residue Cys118 is the Nucleophile of the active site.

Belongs to the MsrB Met sulfoxide reductase family.

It catalyses the reaction L-methionyl-[protein] + [thioredoxin]-disulfide + H2O = L-methionyl-(R)-S-oxide-[protein] + [thioredoxin]-dithiol. The sequence is that of Peptide methionine sulfoxide reductase MsrB from Listeria monocytogenes serovar 1/2a (strain ATCC BAA-679 / EGD-e).